The following is a 202-amino-acid chain: tRNA (pseudouridine(54)-N(1))-methyltransferase (202 aa).

Residues L130, G152, and C185 each coordinate S-adenosyl-L-methionine.

This sequence belongs to the methyltransferase superfamily. TrmY family. In terms of assembly, homodimer.

It localises to the cytoplasm. It carries out the reaction pseudouridine(54) in tRNA + S-adenosyl-L-methionine = N(1)-methylpseudouridine(54) in tRNA + S-adenosyl-L-homocysteine + H(+). In terms of biological role, specifically catalyzes the N1-methylation of pseudouridine at position 54 (Psi54) in tRNAs. This is tRNA (pseudouridine(54)-N(1))-methyltransferase from Methanococcoides burtonii (strain DSM 6242 / NBRC 107633 / OCM 468 / ACE-M).